Here is a 1129-residue protein sequence, read N- to C-terminus: Regulator of nonsense transcripts 1 (1129 aa).

The sufficient for interaction with RENT2 stretch occupies residues 1–415 (MSVEAYGPSS…LRSSVGAPVE (415 aa)). A phosphoserine mark is found at S10 and S31. The disordered stretch occupies residues 39 to 70 (TLPSQTQTPPGGPGGPGGGGAGGPGGAGAGAA). A compositionally biased stretch (gly residues) spans 52 to 69 (GGPGGGGAGGPGGAGAGA). One can recognise a Upf1 CH-rich domain in the interval 115–272 (TKDLPIHACS…NKLEELWKEN (158 aa)). The Zn(2+) site is built by C123, C126, C137, S140, C145, H155, H159, C165, C183, C186, C209, and C213. A C3H region spans residues 123 to 155 (CSYCGIHDPACVVYCNTSKKWFCNGRGNTSGSH). The CC/SHH/C stretch occupies residues 137-165 (CNTSKKWFCNGRGNTSGSHIVNHLVRAKC). The interval 183-213 (CYNCGCRNVFLLGFIPAKADSVVVLLCRQPC) is C4. ATP-binding positions include Q486 and 506–510 (GTGKT). S565 is modified (phosphoserine). Positions 676, 713, and 844 each coordinate ATP. Residue S956 is modified to Phosphoserine. 2 disordered regions span residues 1009-1058 (FGQA…VASQ) and 1073-1096 (SQPSQMSQPGLSQPELSQDSYLGD). Omega-N-methylarginine is present on R1019. A compositionally biased stretch (basic residues) spans 1025 to 1034 (KTGRGGRQKN). Positions 1041 to 1058 (PSQTNLPNSQASQDVASQ) are enriched in polar residues. The segment covering 1073-1086 (SQPSQMSQPGLSQP) has biased composition (low complexity). Residues S1089, S1107, S1110, and S1127 each carry the phosphoserine modification. 2 consecutive short sequence motifs ([ST]-Q motif) follow at residues 1089 to 1090 (SQ) and 1107 to 1108 (SQ). The segment at 1110-1129 (STYQGERAYQHGGVTGLSQY) is disordered.

This sequence belongs to the DNA2/NAM7 helicase family. As to quaternary structure, found in a post-splicing messenger ribonucleoprotein (mRNP) complex. Associates with the exon junction complex (EJC). Associates with the SGM1C complex; is phosphorylated by the complex kinase component SGM1. Part of a complex composed of SMG1, DHX34 and UPF1; within the complex DHX34 acts as a scaffolding protein to facilitate SMG1 phosphorylation of UPF1. Interacts with UPF2. Interacts with UPF3A and UPF3B. Interacts with EST1A. Interacts with SLBP. Interacts (when hyperphosphorylated) with PNRC2. Interacts with AGO1 and AGO2. Interacts with GSPT2. Interacts with isoform 1 and isoform 5 of ADAR/ADAR1. Interacts with SMG7. Interacts with ZC3H12A; this interaction occurs in a mRNA translationally active- and termination-dependent manner and is essential for ZC3H12A-mediated degradation of target mRNAs. Interacts with CPSF6. Interacts with MOV10; the interaction is direct and RNA-dependent. Interacts with SHFL; the interaction increases in the presence of RNA. Interacts with UPF2 and DDX4; interactions are mediated by TDRD6. Interacts with DHX34 and PABPC1/PABP1; the interactions are RNA-independent. Interacts with RBM46. In terms of assembly, (Microbial infection) Interacts with human T-cell leukemia virus 1/HTLV-1 protein Tax; this interaction inhibits the host nonsense-mediated mRNA decay (NMD). Post-translationally, phosphorylated by SMG1; required for formation of mRNA surveillance complexes. As to expression, ubiquitous.

The protein resides in the cytoplasm. The protein localises to the P-body. Its subcellular location is the nucleus. It is found in the perinuclear region. It carries out the reaction ATP + H2O = ADP + phosphate + H(+). RNA-dependent helicase required for nonsense-mediated decay (NMD) of aberrant mRNAs containing premature stop codons and modulates the expression level of normal mRNAs. Is recruited to mRNAs upon translation termination and undergoes a cycle of phosphorylation and dephosphorylation; its phosphorylation appears to be a key step in NMD. Recruited by release factors to stalled ribosomes together with the SMG1C protein kinase complex to form the transient SURF (SMG1-UPF1-eRF1-eRF3) complex. In EJC-dependent NMD, the SURF complex associates with the exon junction complex (EJC) (located 50-55 or more nucleotides downstream from the termination codon) through UPF2 and allows the formation of an UPF1-UPF2-UPF3 surveillance complex which is believed to activate NMD. Phosphorylated UPF1 is recognized by EST1B/SMG5, SMG6 and SMG7 which are thought to provide a link to the mRNA degradation machinery involving exonucleolytic and endonucleolytic pathways, and to serve as adapters to protein phosphatase 2A (PP2A), thereby triggering UPF1 dephosphorylation and allowing the recycling of NMD factors. UPF1 can also activate NMD without UPF2 or UPF3, and in the absence of the NMD-enhancing downstream EJC indicative for alternative NMD pathways. Plays a role in replication-dependent histone mRNA degradation at the end of phase S; the function is independent of UPF2. For the recognition of premature termination codons (PTC) and initiation of NMD a competitive interaction between UPF1 and PABPC1 with the ribosome-bound release factors is proposed. The ATPase activity of UPF1 is required for disassembly of mRNPs undergoing NMD. Together with UPF2 and dependent on TDRD6, mediates the degradation of mRNA harboring long 3'UTR by inducing the NMD machinery. Also capable of unwinding double-stranded DNA and translocating on single-stranded DNA. The chain is Regulator of nonsense transcripts 1 from Homo sapiens (Human).